The following is a 351-amino-acid chain: MSDPVFIVPKAGLTLGAVAEACGVPLPEGADPSQPVTGAAPLETAGPSDLAYMDNARYGDALGTTRALACLVSPRFAPRVPAGTIALVTRDPYRAYAGLLARLYEEAMRPGSLFAASGVSPGAHVHPQARLEDGVRVDPGAVVGPGAEIGSGTVLGPNAVIGPNVRIGRDCSIGSGATLTHALVGNRVIIHPGARIGQDGFGFAMGAGGHIKVPQVGRVIIQDDVEIGANTTIDRGASRDTVVGEGTKIDNLVQIAHNVVIGRHCVIVSGVGISGSTTLEDYVVLGGQVGVVGHLRIGMGSQIAGSSNVNRDVPPGSRWGGTPAKPVRTWFREMTTLARLAERGGKDDGEG.

H257 (proton acceptor) is an active-site residue.

It belongs to the transferase hexapeptide repeat family. LpxD subfamily. In terms of assembly, homotrimer.

It carries out the reaction a UDP-3-O-[(3R)-3-hydroxyacyl]-alpha-D-glucosamine + a (3R)-hydroxyacyl-[ACP] = a UDP-2-N,3-O-bis[(3R)-3-hydroxyacyl]-alpha-D-glucosamine + holo-[ACP] + H(+). Its pathway is bacterial outer membrane biogenesis; LPS lipid A biosynthesis. Functionally, catalyzes the N-acylation of UDP-3-O-acylglucosamine using 3-hydroxyacyl-ACP as the acyl donor. Is involved in the biosynthesis of lipid A, a phosphorylated glycolipid that anchors the lipopolysaccharide to the outer membrane of the cell. The protein is UDP-3-O-acylglucosamine N-acyltransferase of Methylorubrum populi (strain ATCC BAA-705 / NCIMB 13946 / BJ001) (Methylobacterium populi).